The chain runs to 181 residues: Oligoribonuclease (181 aa).

The Exonuclease domain occupies 8-171 (LIWIDLEMTG…QDIQESIAEL (164 aa)). The active site involves tyrosine 129.

Belongs to the oligoribonuclease family.

Its subcellular location is the cytoplasm. In terms of biological role, 3'-to-5' exoribonuclease specific for small oligoribonucleotides. This chain is Oligoribonuclease, found in Shewanella oneidensis (strain ATCC 700550 / JCM 31522 / CIP 106686 / LMG 19005 / NCIMB 14063 / MR-1).